We begin with the raw amino-acid sequence, 910 residues long: Protein translocase subunit SecA (910 aa).

ATP is bound by residues Gln-89, 107–111 (GEGKT), and Asp-502. The Zn(2+) site is built by Cys-889, Cys-891, Cys-900, and His-901.

This sequence belongs to the SecA family. As to quaternary structure, monomer and homodimer. Part of the essential Sec protein translocation apparatus which comprises SecA, SecYEG and auxiliary proteins SecDF-YajC and YidC. Requires Zn(2+) as cofactor.

It localises to the cell inner membrane. The protein localises to the cytoplasm. It catalyses the reaction ATP + H2O + cellular proteinSide 1 = ADP + phosphate + cellular proteinSide 2.. Functionally, part of the Sec protein translocase complex. Interacts with the SecYEG preprotein conducting channel. Has a central role in coupling the hydrolysis of ATP to the transfer of proteins into and across the cell membrane, serving both as a receptor for the preprotein-SecB complex and as an ATP-driven molecular motor driving the stepwise translocation of polypeptide chains across the membrane. The sequence is that of Protein translocase subunit SecA from Bartonella bacilliformis (strain ATCC 35685 / KC583 / Herrer 020/F12,63).